The primary structure comprises 873 residues: Tetratricopeptide repeat protein 16 (873 aa).

A disordered region spans residues 1–20 (MTDSDEDALKVDQGPSRDIP). TPR repeat units lie at residues 61 to 94 (VREY…DPQL), 96 to 128 (DFYA…QQDN), 136 to 169 (TFVL…QPEK), 251 to 284 (AQQA…NPLD), 285 to 318 (PSLF…VTED), 331 to 364 (LLTY…EQQE), 365 to 398 (KGLY…SPQD), and 406 to 439 (GLLQ…NPQK). Disordered regions lie at residues 553–626 (EELK…TSET) and 639–873 (SATA…YEAV). The segment covering 571–582 (GEAEAPEEEEEK) has biased composition (acidic residues). Positions 583–593 (EKEKKEEKKSE) are enriched in basic and acidic residues. Polar residues-rich tracts occupy residues 600-626 (ASLS…TSET), 639-663 (SATA…NNRE), and 675-693 (TQGQ…SQRR). Residues 694-708 (NSSKTKATIHKRNSS) are compositionally biased toward basic residues. Polar residues predominate over residues 709-750 (KTKATQSQRRNSSKTRATQGQGQSSSKTEATQGQRQSSSEIE). Residues 763–784 (KTTRSPRQRPRKVKAARGRSWR) are compositionally biased toward basic residues. Polar residues-rich tracts occupy residues 800–828 (RSST…GQRS) and 836–860 (GKSQ…SLSK).

This is Tetratricopeptide repeat protein 16 (TTC16) from Homo sapiens (Human).